We begin with the raw amino-acid sequence, 102 residues long: NADH-quinone oxidoreductase subunit K 1 (102 aa).

3 consecutive transmembrane segments (helical) span residues 5–25 (LLHV…CVLV), 30–50 (IIMM…AFVG), and 62–82 (VFAL…LALV).

Belongs to the complex I subunit 4L family. In terms of assembly, NDH-1 is composed of 14 different subunits. Subunits NuoA, H, J, K, L, M, N constitute the membrane sector of the complex.

Its subcellular location is the cell inner membrane. It catalyses the reaction a quinone + NADH + 5 H(+)(in) = a quinol + NAD(+) + 4 H(+)(out). Its function is as follows. NDH-1 shuttles electrons from NADH, via FMN and iron-sulfur (Fe-S) centers, to quinones in the respiratory chain. The immediate electron acceptor for the enzyme in this species is believed to be ubiquinone. Couples the redox reaction to proton translocation (for every two electrons transferred, four hydrogen ions are translocated across the cytoplasmic membrane), and thus conserves the redox energy in a proton gradient. The chain is NADH-quinone oxidoreductase subunit K 1 from Geotalea uraniireducens (strain Rf4) (Geobacter uraniireducens).